The chain runs to 96 residues: Small ribosomal subunit protein bS6 (96 aa).

Belongs to the bacterial ribosomal protein bS6 family.

Binds together with bS18 to 16S ribosomal RNA. The polypeptide is Small ribosomal subunit protein bS6 (Streptococcus equi subsp. equi (strain 4047)).